Consider the following 120-residue polypeptide: MHARSEIRLTFNQDRPQSNEDDGSGLAVQEAKPILQAPPMYKVVLFNDDYTPMDFVVEVLETFFSLNRELATKIMLTVHTEGRAVCGLFTRDIAETKAMQVNQYARESQHPLLCEIEKDG.

A disordered region spans residues 1-25; sequence MHARSEIRLTFNQDRPQSNEDDGSG.

Belongs to the ClpS family. As to quaternary structure, binds to the N-terminal domain of the chaperone ClpA.

In terms of biological role, involved in the modulation of the specificity of the ClpAP-mediated ATP-dependent protein degradation. The sequence is that of ATP-dependent Clp protease adapter protein ClpS from Pseudomonas putida (strain W619).